We begin with the raw amino-acid sequence, 664 residues long: Lamin tail domain-containing protein 2 (664 aa).

Residues 1–40 (MAPKSCQESEDKQVSPAPAGVQPDSSDLGSPVGTPVDRVA) form a disordered region. Positions 118–169 (QDKFLRNQVQKLTLELKAQKEQAQQEKQQLEEKLQQNLWAKQQLEAELQTFQ) form a coiled coil. A compositionally biased stretch (polar residues) spans 245-260 (SDQKQSQPPTSETYTL). Disordered stretches follow at residues 245–272 (SDQKQSQPPTSETYTLDSEGATKHTEKP) and 286–329 (TSSS…MQEH). The span at 286–298 (TSSSERTQSDTSS) shows a compositional bias: low complexity. Residues 312 to 325 (GHPSQGTNLASSEQ) show a composition bias toward polar residues. An LTD domain is found at 362–481 (PYTRPQLNPF…QVLSEHQATP (120 aa)). The segment at 504–563 (SESEPDVHPGEQQCRPSSPQKGRAKDAGARRKKPGPGVRQHRHSSTSGLRASRTLHPTET) is disordered. Positions 533-547 (RRKKPGPGVRQHRHS) are enriched in basic residues.

This chain is Lamin tail domain-containing protein 2 (Lmntd2), found in Mus musculus (Mouse).